The sequence spans 493 residues: Glutamyl-tRNA(Gln) amidotransferase subunit A (493 aa).

Catalysis depends on charge relay system residues lysine 79 and serine 159. Catalysis depends on serine 183, which acts as the Acyl-ester intermediate.

Belongs to the amidase family. GatA subfamily. As to quaternary structure, heterotrimer of A, B and C subunits.

The catalysed reaction is L-glutamyl-tRNA(Gln) + L-glutamine + ATP + H2O = L-glutaminyl-tRNA(Gln) + L-glutamate + ADP + phosphate + H(+). Its function is as follows. Allows the formation of correctly charged Gln-tRNA(Gln) through the transamidation of misacylated Glu-tRNA(Gln) in organisms which lack glutaminyl-tRNA synthetase. The reaction takes place in the presence of glutamine and ATP through an activated gamma-phospho-Glu-tRNA(Gln). The polypeptide is Glutamyl-tRNA(Gln) amidotransferase subunit A (Brucella anthropi (strain ATCC 49188 / DSM 6882 / CCUG 24695 / JCM 21032 / LMG 3331 / NBRC 15819 / NCTC 12168 / Alc 37) (Ochrobactrum anthropi)).